The primary structure comprises 197 residues: Imidazoleglycerol-phosphate dehydratase (197 aa).

Belongs to the imidazoleglycerol-phosphate dehydratase family.

It localises to the cytoplasm. It catalyses the reaction D-erythro-1-(imidazol-4-yl)glycerol 3-phosphate = 3-(imidazol-4-yl)-2-oxopropyl phosphate + H2O. Its pathway is amino-acid biosynthesis; L-histidine biosynthesis; L-histidine from 5-phospho-alpha-D-ribose 1-diphosphate: step 6/9. The sequence is that of Imidazoleglycerol-phosphate dehydratase from Pseudomonas putida (strain ATCC 700007 / DSM 6899 / JCM 31910 / BCRC 17059 / LMG 24140 / F1).